Reading from the N-terminus, the 342-residue chain is Foldase protein PrsA (342 aa).

Positions 1 to 22 are cleaved as a signal peptide; the sequence is MVSVKKIVASALVGVLMFSAVG. Cys-23 carries the N-palmitoyl cysteine lipid modification. Cys-23 is lipidated: S-diacylglycerol cysteine. The PpiC domain maps to 189-284; that stretch reads DSGVLTKHLL…FGYHIIQAGA (96 aa).

This sequence belongs to the PrsA family.

It localises to the cell membrane. It catalyses the reaction [protein]-peptidylproline (omega=180) = [protein]-peptidylproline (omega=0). Functionally, plays a major role in protein secretion by helping the post-translocational extracellular folding of several secreted proteins. This Clostridium perfringens (strain 13 / Type A) protein is Foldase protein PrsA.